The following is a 208-amino-acid chain: Superoxide dismutase [Mn] 2 (208 aa).

Mn(2+) contacts are provided by H28, H83, D165, and H169.

This sequence belongs to the iron/manganese superoxide dismutase family. As to quaternary structure, homodimer. The cofactor is Mn(2+).

It carries out the reaction 2 superoxide + 2 H(+) = H2O2 + O2. Destroys superoxide anion radicals which are normally produced within the cells and which are toxic to biological systems. This chain is Superoxide dismutase [Mn] 2 (sodA2), found in Bacillus cereus (strain ATCC 14579 / DSM 31 / CCUG 7414 / JCM 2152 / NBRC 15305 / NCIMB 9373 / NCTC 2599 / NRRL B-3711).